Reading from the N-terminus, the 165-residue chain is Putative 4-hydroxy-4-methyl-2-oxoglutarate aldolase (165 aa).

Substrate contacts are provided by residues 80-83 and Arg-102; that span reads GGNL. Asp-103 provides a ligand contact to a divalent metal cation.

Belongs to the class II aldolase/RraA-like family. As to quaternary structure, homotrimer. Requires a divalent metal cation as cofactor.

It carries out the reaction 4-hydroxy-4-methyl-2-oxoglutarate = 2 pyruvate. It catalyses the reaction oxaloacetate + H(+) = pyruvate + CO2. Catalyzes the aldol cleavage of 4-hydroxy-4-methyl-2-oxoglutarate (HMG) into 2 molecules of pyruvate. Also contains a secondary oxaloacetate (OAA) decarboxylase activity due to the common pyruvate enolate transition state formed following C-C bond cleavage in the retro-aldol and decarboxylation reactions. The chain is Putative 4-hydroxy-4-methyl-2-oxoglutarate aldolase from Burkholderia mallei (strain NCTC 10247).